The following is a 582-amino-acid chain: Glutamine--tRNA ligase (582 aa).

The 'HIGH' region motif lies at Pro50–His60. ATP contacts are provided by residues Glu51–Asn53 and His57–Ser63. L-glutamine-binding residues include Asp83 and Tyr235. ATP-binding positions include Thr254 and Arg289–Leu290. The 'KMSKS' region motif lies at Ile296 to Arg300.

Belongs to the class-I aminoacyl-tRNA synthetase family. Monomer.

It localises to the cytoplasm. It carries out the reaction tRNA(Gln) + L-glutamine + ATP = L-glutaminyl-tRNA(Gln) + AMP + diphosphate. The protein is Glutamine--tRNA ligase of Cupriavidus metallidurans (strain ATCC 43123 / DSM 2839 / NBRC 102507 / CH34) (Ralstonia metallidurans).